The primary structure comprises 734 residues: Alpha-catulin (734 aa).

A phosphoserine mark is found at serine 374 and serine 538.

The protein belongs to the vinculin/alpha-catenin family. Interacts with ARHGEF1. Interacts with DTNA. The interaction is required for correct localization of both CTNL1 and DTNA. Widely expressed. Expressed at lower level in neural tissues and at the highest level in the adrenal gland.

The protein localises to the cytoplasm. The protein resides in the cytoskeleton. Its subcellular location is the cell membrane. May modulate the Rho pathway signaling by providing a scaffold for the Lbc Rho guanine nucleotide exchange factor (ARHGEF1). This Homo sapiens (Human) protein is Alpha-catulin (CTNNAL1).